We begin with the raw amino-acid sequence, 501 residues long: Cytochrome P450 monooxygenase ccsG (501 aa).

An N-terminal signal peptide occupies residues 1-28 (MMITLFTLAVVSIGFFLWWLLTVQPAVT). Asn115 and Asn154 each carry an N-linked (GlcNAc...) asparagine glycan. Cys443 contacts heme.

This sequence belongs to the cytochrome P450 family. Requires heme as cofactor.

The protein operates within mycotoxin biosynthesis. Its function is as follows. Cytochrome P450 monooxygenase; part of the gene cluster that mediates the biosynthesis of a family of the mycotoxins cytochalasins E and K. The hybrid PKS-NRPS synthetase ccsA and the enoyl reductase ccsC are responsible for fusion of phenylalanine with an octaketide backbone and subsequent release of the stable tetramic acid precursor. The polyketide synthase module (PKS) of the PKS-NRPS ccsA is responsible for the synthesis of the octaketide backbone. The downstream nonribosomal peptide synthetase (NRPS) amidates the carboxyl end of the octaketide with a phenylalanine. A reductase-like domain (R) at the C-terminus catalyzes the reductive release of the polyketide-amino acid intermediate. Because ccsA lacks a designated enoylreductase (ER) domain, the required activity is provided the enoyl reductase ccsC. Upon formation of the 11-membered carbocycle-fused perhydroisoindolone intermediate, a number of oxidative steps are required to afford the final cytochalasin E and K, including two hydroxylations at C17 and C18, one alcohol oxidation at C17, one epoxidation at C6 and C7 and two Baeyer-Villiger oxidations. The oxidative modification at C17, C18 and the C6-C7 epoxidation are likely to be catalyzed by the two cytochrome P450 oxygenases ccsD and ccsG. CcsD may be responsible for the epoxidation of the C6-C7 double bond. CcsG may be responsible for the successive oxidative modifications at C17 and C18. The double Baeyer-Villiger oxidations of ketocytochalasin to precytochalasin and cytochalasin Z(16) are among the final steps leading to cytochalasin E and K and are catalyzed by ccsB. The first oxygen insertion step follows that of the classic BVMO mechanism, generating the ester precytochalasin. Release of precytochalasin into an aqueous environment can generate the shunt product iso-precytochalasin through spontaneous isomerization. Alternatively, precytochalasin can undergo further oxidation by ccsB to yield the in-line carbonate-containing cytochalasin Z(16). Cytochalasin Z(16) is a precursor to cytochalasin E and cytochalasin K, whereas iso-precytochalasin is a precursor to cytochalasin Z(17) and rosellichalasin. The hydrolyase ccsE may catalyze hydrolysis of epoxide bond in cytochalasin E to afford cytochalasin K. The function of ccsF has not been assigned but it may play a role in post-PKS-NRPS biosynthetic step, resistance or transport of cytochalasins and related PKS-NRPS products. The sequence is that of Cytochrome P450 monooxygenase ccsG from Aspergillus clavatus (strain ATCC 1007 / CBS 513.65 / DSM 816 / NCTC 3887 / NRRL 1 / QM 1276 / 107).